The chain runs to 693 residues: Ion-translocating oxidoreductase complex subunit C (693 aa).

4Fe-4S ferredoxin-type domains follow at residues Met-368–Tyr-397 and Lys-407–Tyr-436. [4Fe-4S] cluster-binding residues include Cys-377, Cys-380, Cys-383, Cys-387, Cys-416, Cys-419, Cys-422, and Cys-426. Basic and acidic residues predominate over residues Arg-539–Ser-548. A disordered region spans residues Arg-539–Pro-564.

This sequence belongs to the 4Fe4S bacterial-type ferredoxin family. RnfC subfamily. In terms of assembly, the complex is composed of six subunits: RnfA, RnfB, RnfC, RnfD, RnfE and RnfG. The cofactor is [4Fe-4S] cluster.

The protein localises to the cell inner membrane. Its function is as follows. Part of a membrane-bound complex that couples electron transfer with translocation of ions across the membrane. This chain is Ion-translocating oxidoreductase complex subunit C, found in Pectobacterium atrosepticum (strain SCRI 1043 / ATCC BAA-672) (Erwinia carotovora subsp. atroseptica).